Here is an 88-residue protein sequence, read N- to C-terminus: uncharacterized protein (88 aa).

The dksA C4-type zinc finger occupies Cys39–Cys63.

This is an uncharacterized protein from Escherichia coli (strain K12).